Here is a 541-residue protein sequence, read N- to C-terminus: Chaperonin GroEL (541 aa).

ATP is bound by residues 29 to 32, 86 to 90, G413, and D495; these read TLGP and DGTTT.

Forms a cylinder of 14 subunits composed of two heptameric rings stacked back-to-back. Interacts with the co-chaperonin GroES.

The protein resides in the cytoplasm. The enzyme catalyses ATP + H2O + a folded polypeptide = ADP + phosphate + an unfolded polypeptide.. Together with its co-chaperonin GroES, plays an essential role in assisting protein folding. The GroEL-GroES system forms a nano-cage that allows encapsulation of the non-native substrate proteins and provides a physical environment optimized to promote and accelerate protein folding. This is Chaperonin GroEL from Thermoanaerobacter brockii (Thermoanaerobium brockii).